The following is a 261-amino-acid chain: 5'-nucleotidase SurE (261 aa).

Asp-17, Asp-18, Ser-48, and Asn-104 together coordinate a divalent metal cation.

This sequence belongs to the SurE nucleotidase family. A divalent metal cation is required as a cofactor.

It localises to the cytoplasm. The enzyme catalyses a ribonucleoside 5'-phosphate + H2O = a ribonucleoside + phosphate. Functionally, nucleotidase that shows phosphatase activity on nucleoside 5'-monophosphates. This chain is 5'-nucleotidase SurE, found in Deinococcus geothermalis (strain DSM 11300 / CIP 105573 / AG-3a).